Consider the following 1581-residue polypeptide: Ankyrin repeat domain-containing protein 26 (1581 aa).

The segment at 1–22 is disordered; the sequence is MKKIFGFRSKGPSPLGPSARPR. Ser13 is modified (phosphoserine). ANK repeat units follow at residues 46-76, 80-109, 113-142, 146-175, and 179-208; these read KDMG…GVND, KDRT…EIDA, ESST…DPNV, SGNT…NIEA, and DDLT…SIHA. Disordered stretches follow at residues 225–270, 299–343, 361–381, and 488–652; these read RLQR…FDNK, LDNG…PVEG, SASQ…WHKS, and VLNK…QTAA. Residues 229–250 are compositionally biased toward polar residues; it reads SENSNPVDNGSEDGSLTRSYNT. Ser239 and Ser260 each carry phosphoserine. Residues 308-319 are compositionally biased toward acidic residues; sequence SDSPSESEDAIE. Residues 327-337 show a composition bias toward polar residues; the sequence is RVQTLSPSRQS. Positions 367–381 are enriched in basic and acidic residues; the sequence is PNHDNLTRADGWHKS. Residues 491 to 504 are compositionally biased toward polar residues; sequence KTETVGMTDAQTFK. Basic and acidic residues-rich tracts occupy residues 505–516, 524–538, and 585–601; these read SEPESVSREEQT, SQQK…KNNE, and KEAK…REPA. Ser511 carries the post-translational modification Phosphoserine. Coiled coils occupy residues 715 to 845, 876 to 1345, 1396 to 1470, and 1521 to 1550; these read RSHC…NARM, HEKE…MVEH, RSQM…RSLL, and LTKM…FCRV.

In terms of assembly, interacts with TRIO. Interacts with GPS2. Interacts with CCDC85B. Interacts with HMMR. Widely expressed. Expressed in the arcuate and ventromedial nuclei within the hypothalamus and in the ependyma and the circumventricular organs (at protein level).

It is found in the cytoplasm. Its subcellular location is the cytosol. Functionally, acts as a regulator of adipogenesis. Involved in the regulation of the feeding behavior. This Mus musculus (Mouse) protein is Ankyrin repeat domain-containing protein 26 (Ankrd26).